A 633-amino-acid chain; its full sequence is Chaperone protein DnaK (633 aa).

Thr198 carries the phosphothreonine; by autocatalysis modification. The tract at residues Gln599–Lys633 is disordered. Positions Asp622–Lys633 are enriched in acidic residues.

Belongs to the heat shock protein 70 family.

Functionally, acts as a chaperone. This is Chaperone protein DnaK from Desulfotalea psychrophila (strain LSv54 / DSM 12343).